Consider the following 176-residue polypeptide: ATP synthase subunit delta (176 aa).

Belongs to the ATPase delta chain family. As to quaternary structure, F-type ATPases have 2 components, F(1) - the catalytic core - and F(0) - the membrane proton channel. F(1) has five subunits: alpha(3), beta(3), gamma(1), delta(1), epsilon(1). F(0) has three main subunits: a(1), b(2) and c(10-14). The alpha and beta chains form an alternating ring which encloses part of the gamma chain. F(1) is attached to F(0) by a central stalk formed by the gamma and epsilon chains, while a peripheral stalk is formed by the delta and b chains.

It localises to the cell inner membrane. In terms of biological role, f(1)F(0) ATP synthase produces ATP from ADP in the presence of a proton or sodium gradient. F-type ATPases consist of two structural domains, F(1) containing the extramembraneous catalytic core and F(0) containing the membrane proton channel, linked together by a central stalk and a peripheral stalk. During catalysis, ATP synthesis in the catalytic domain of F(1) is coupled via a rotary mechanism of the central stalk subunits to proton translocation. Functionally, this protein is part of the stalk that links CF(0) to CF(1). It either transmits conformational changes from CF(0) to CF(1) or is implicated in proton conduction. The sequence is that of ATP synthase subunit delta from Campylobacter hominis (strain ATCC BAA-381 / DSM 21671 / CCUG 45161 / LMG 19568 / NCTC 13146 / CH001A).